Here is a 247-residue protein sequence, read N- to C-terminus: Putative trypsin-6 (247 aa).

An N-terminal signal peptide occupies residues 1–15 (MNPLLILAFVGAAVA). The Peptidase S1 domain occupies 24–244 (IVGGYTCEEN…YVDWIKDTIA (221 aa)). The cysteines at positions 48 and 64 are disulfide-linked. H63 (charge relay system) is an active-site residue. Residues E75, N77, V80, and E85 each contribute to the Ca(2+) site. Catalysis depends on D107, which acts as the Charge relay system. Cystine bridges form between C139–C206, C171–C185, and C196–C220. Catalysis depends on S200, which acts as the Charge relay system.

Belongs to the peptidase S1 family. Tryptase subfamily. As to expression, overexpressed in metastasing in non small cell lung tumors, leading to an enhanced cell migration.

The protein localises to the secreted. It catalyses the reaction Preferential cleavage: Arg-|-Xaa, Lys-|-Xaa.. Its function is as follows. May regulate cell migration. This chain is Putative trypsin-6 (PRSS3P2), found in Homo sapiens (Human).